A 155-amino-acid polypeptide reads, in one-letter code: Transcriptional repressor NrdR (155 aa).

The segment at 3–34 (CPFCGNIDTQVKDSRPAEDHVSIRRRRFCPAC) is a zinc-finger region. The 91-residue stretch at 49–139 (LVVIKSTGKR…VYKNFQAADD (91 aa)) folds into the ATP-cone domain.

Belongs to the NrdR family. The cofactor is Zn(2+).

In terms of biological role, negatively regulates transcription of bacterial ribonucleotide reductase nrd genes and operons by binding to NrdR-boxes. This Roseobacter denitrificans (strain ATCC 33942 / OCh 114) (Erythrobacter sp. (strain OCh 114)) protein is Transcriptional repressor NrdR.